The chain runs to 646 residues: Acetyl-coenzyme A synthetase (646 aa).

CoA-binding positions include 189–192 (RGPK), T307, and N331. ATP is bound by residues 383–385 (GEP), 407–412 (DTWWQT), D496, and R511. S519 is a binding site for CoA. R522 lines the ATP pocket. The Mg(2+) site is built by V533, H535, and V538. Position 580 (R580) interacts with CoA. K605 carries the N6-acetyllysine modification.

Belongs to the ATP-dependent AMP-binding enzyme family. The cofactor is Mg(2+). Post-translationally, acetylated. Deacetylation by the SIR2-homolog deacetylase activates the enzyme.

It catalyses the reaction acetate + ATP + CoA = acetyl-CoA + AMP + diphosphate. Its function is as follows. Catalyzes the conversion of acetate into acetyl-CoA (AcCoA), an essential intermediate at the junction of anabolic and catabolic pathways. AcsA undergoes a two-step reaction. In the first half reaction, AcsA combines acetate with ATP to form acetyl-adenylate (AcAMP) intermediate. In the second half reaction, it can then transfer the acetyl group from AcAMP to the sulfhydryl group of CoA, forming the product AcCoA. The protein is Acetyl-coenzyme A synthetase of Desulfatibacillum aliphaticivorans.